A 490-amino-acid polypeptide reads, in one-letter code: MTATETVRVRFCPSPTGTPHVGLVRTALFNWAYARHTGGTFVFRIEDTDAQRDSEESYLALLDALRWLGLDWDEGPEVGGPYGPYRQSQRAEIYRDVLARLLAAGEAYHAFSTPEEVEARHVAAGRNPKLGYDNFDRHLTDAQRAAYLAEGRQPVVRLRMPDDDLAWNDLVRGPVTFAAGSVPDFALTRASGDPLYTLVNPCDDALMKITHVLRGEDLLPSTPRQLALHQALIRIGVAERIPKFAHLPTVLGEGTKKLSKRDPQSNLFAHRDRGFIPEGLLNYLALLGWSIADDHDLFGLDEMVAAFDVADVNSSPARFDQKKADALNAEHIRMLDVGDFTVRLRDHLDTHGHHIALDEAAFAAAAELVQTRIVVLGDAWELLKFFNDDQYVIDPKAAAKELGPDGAAVLDAALAALTSVTDWTAPLIEAALKDALIEGLALKPRKAFSPIRVAATGTTVSPPLFESLELLGRDRSMQRLRAARQLVGHA.

Residues Pro13–Leu23 carry the 'HIGH' region motif. Residues Lys257–Arg261 carry the 'KMSKS' region motif. Lys260 is an ATP binding site.

This sequence belongs to the class-I aminoacyl-tRNA synthetase family. Glutamate--tRNA ligase type 1 subfamily. In terms of assembly, monomer.

The protein resides in the cytoplasm. It carries out the reaction tRNA(Glu) + L-glutamate + ATP = L-glutamyl-tRNA(Glu) + AMP + diphosphate. Its function is as follows. Catalyzes the attachment of glutamate to tRNA(Glu) in a two-step reaction: glutamate is first activated by ATP to form Glu-AMP and then transferred to the acceptor end of tRNA(Glu). This Mycobacterium tuberculosis (strain ATCC 25177 / H37Ra) protein is Glutamate--tRNA ligase.